A 225-amino-acid chain; its full sequence is Glutathione s-transferase kappa 2 (225 aa).

Residues Ser-15–Tyr-17, Asn-52, and Ser-200–Asp-201 each bind glutathione.

This sequence belongs to the GST superfamily. Kappa family. As to expression, expressed in the pharynx, body wall muscles and epidermis. Weaker expression is seen in the intestine.

The protein localises to the mitochondrion. It carries out the reaction RX + glutathione = an S-substituted glutathione + a halide anion + H(+). In terms of biological role, has roles in respiratory and lipid metabolism. This chain is Glutathione s-transferase kappa 2 (gstk-2), found in Caenorhabditis elegans.